The chain runs to 21 residues: Pseudogermin (21 aa).

It belongs to the germin family. In terms of assembly, homotetramer.

The protein localises to the secreted. It is found in the extracellular space. Its subcellular location is the apoplast. It localises to the cell wall. May subsume the role of germin at the low water potentials during embryogenesis. The protein is Pseudogermin of Triticum aestivum (Wheat).